A 563-amino-acid polypeptide reads, in one-letter code: MQWTQAYTPIGGNLLLSALAALVPIIFFFWALAIKRMKGYTAGLATLGIALIIAVLVYRMPAEKALMSATQGAVYGLLPIGWIIVTSVFLYKITVKTGQFDIIRSSVLSITDDRRLQALLIAFSFGAFLEGAAGFGAPVAISAALLVGLGFNPLYAAGICLIANTAPVAFGAIGIPITAVEGPTGIPAMEISQMVGRQLPFLSVFIPLYLIIIMSGFRKALEIWPAILVSGVSFAVVQYLSSNFLGPELPDVLSALVSMAALAVFLKWWKPKTTFRFAGEQESAASIETARTNPAAPAYRGGQIFKAWSPFLLLTAMISVWGIPSVKSALTGHYEGSAVFLKWLNAVGEKLTFSPGVPFLNNQIVNADGTPIEAVYKLEVLGSAGTAILIAAVLSKFITAISWKDWGTVFKETVQELKLPILTIASVVGFAYVTNSSGMSTTLGMTLALTGSMFTFFSPVLGWLGVFITGSDTSANLLFGNLQKVTALSVGMDPVLSVAANSSGGVTGKMISPQSIAVACAAVGLAGKESDLFRFTIKHSLFLLLLVCIITFLQHHVFSWMIP.

Helical transmembrane passes span 14–34, 37–57, 73–93, 131–151, 157–177, 194–214, 220–240, 249–269, 304–324, 381–401, 419–439, 448–468, 506–526, and 542–562; these read LLLSALAALVPIIFFFWALAI, MKGYTAGLATLGIALIIAVLV, AVYGLLPIGWIIVTSVFLYKI, GAAGFGAPVAISAALLVGLGF, AGICLIANTAPVAFGAIGIPI, MVGRQLPFLSVFIPLYLIIIM, ALEIWPAILVSGVSFAVVQYL, LPDVLSALVSMAALAVFLKWW, IFKAWSPFLLLTAMISVWGIP, LGSAGTAILIAAVLSKFITAI, LPILTIASVVGFAYVTNSSGM, ALTGSMFTFFSPVLGWLGVFI, VTGKMISPQSIAVACAAVGLA, and FLLLLVCIITFLQHHVFSWMI.

Belongs to the lactate permease family.

It is found in the cell membrane. Is the principal permease for the uptake of L-lactate in B.subtilis. The chain is L-lactate permease (lutP) from Bacillus subtilis (strain 168).